The primary structure comprises 39 residues: Potassium channel toxin alpha-KTx 2.9 (39 aa).

Disulfide bonds link Cys7–Cys29, Cys13–Cys34, and Cys17–Cys36. Asn39 bears the Asparagine amide mark.

It belongs to the short scorpion toxin superfamily. Potassium channel inhibitor family. Alpha-KTx 02 subfamily. Expressed by the venom gland.

The protein localises to the secreted. Its function is as follows. Blocks Kv1.3/KCNA3 voltage-gated potassium channels of human T-lymphocytes (Kd=0.25 nM). The polypeptide is Potassium channel toxin alpha-KTx 2.9 (Centruroides elegans (Bark scorpion)).